A 273-amino-acid chain; its full sequence is Glutamate racemase (273 aa).

Residues 11-12 and 43-44 contribute to the substrate site; these read DS and YG. The active-site Proton donor/acceptor is the cysteine 74. 75–76 contributes to the substrate binding site; sequence NT. The active-site Proton donor/acceptor is cysteine 185. Position 186–187 (186–187) interacts with substrate; sequence TH.

The protein belongs to the aspartate/glutamate racemases family. Homodimer.

The catalysed reaction is L-glutamate = D-glutamate. It participates in cell wall biogenesis; peptidoglycan biosynthesis. In terms of biological role, provides the (R)-glutamate required for cell wall biosynthesis. This Enterococcus faecalis (strain ATCC 700802 / V583) protein is Glutamate racemase.